The primary structure comprises 304 residues: 1D-myo-inositol 2-acetamido-2-deoxy-alpha-D-glucopyranoside deacetylase 2 (304 aa).

Positions 17, 20, and 152 each coordinate Zn(2+).

It belongs to the MshB deacetylase family. Zn(2+) is required as a cofactor.

The enzyme catalyses 1D-myo-inositol 2-acetamido-2-deoxy-alpha-D-glucopyranoside + H2O = 1D-myo-inositol 2-amino-2-deoxy-alpha-D-glucopyranoside + acetate. Its function is as follows. Catalyzes the deacetylation of 1D-myo-inositol 2-acetamido-2-deoxy-alpha-D-glucopyranoside (GlcNAc-Ins) in the mycothiol biosynthesis pathway. This is 1D-myo-inositol 2-acetamido-2-deoxy-alpha-D-glucopyranoside deacetylase 2 from Catenulispora acidiphila (strain DSM 44928 / JCM 14897 / NBRC 102108 / NRRL B-24433 / ID139908).